Here is a 693-residue protein sequence, read N- to C-terminus: ATP-dependent DNA helicase RecG (693 aa).

The tract at residues 48 to 146 (THLYPIGELL…GDLSTPELQE (99 aa)) is wedge domain. In terms of domain architecture, Helicase ATP-binding spans 283-448 (DMALDVPMMR…AYADLDTSVI (166 aa)). 296 to 303 (GDVGSGKT) contributes to the ATP binding site. Positions 397 to 400 (DEQH) match the DEAH box motif. Residues 482–628 (EGRQAYWVCT…GFVIAQKDLE (147 aa)) form the Helicase C-terminal domain.

This sequence belongs to the helicase family. RecG subfamily. In terms of assembly, monomer in solution. Probably a monomer on HJ DNA. Binding to fork DNA is facilitated by SSB; the proteins do not seem to stably associate. Requires Mg(2+) as cofactor.

The enzyme catalyses Couples ATP hydrolysis with the unwinding of duplex DNA by translocating in the 3'-5' direction.. The catalysed reaction is ATP + H2O = ADP + phosphate + H(+). Its function is as follows. Plays a critical role in recombination and DNA repair. Helps process Holliday junction (HJ) intermediates to mature products by catalyzing branch migration. Has replication fork regression activity, unwinds stalled or blocked replication forks to make a HJ that can be resolved by RuvC or RusA. Also rewinds unwound dsDNA in an ATP-dependent manner. Has double-stranded (ds)DNA unwinding activity characteristic of a DNA helicase with 3'-5' polarity in vitro on linear dsDNA; branched duplex DNA (Y-DNA) substrates adopt different conformations that influence which of the two arms are unwound. Binds and unwinds HJ and Y-DNA but not linear duplex DNA; binds no more than 10 nucleotides of ssDNA at a fork. Has a role in constitutive stable DNA replication (cSDR, DNA replication in the absence of protein synthesis) and R-loop (RNA annealed with dsDNA) formation. Unwinds R-loops but not RNA:DNA hybrids. Is genetically synergistic to RadA and RuvABC. The protein is ATP-dependent DNA helicase RecG of Escherichia coli (strain K12).